We begin with the raw amino-acid sequence, 616 residues long: ATP-dependent zinc metalloprotease FtsH 3 (616 aa).

At 1–9 (MSKNNKKWR) the chain is on the cytoplasmic side. A helical membrane pass occupies residues 10-30 (NAGLYALLLIVVLALASAFFD). At 31 to 108 (RPTQTRETLS…VQPQSDEGFW (78 aa)) the chain is on the lumenal side. A helical transmembrane segment spans residues 109–129 (FRIASTLFLPILLLVGIFFLF). Over 130–616 (RRAQSGPGSQ…NNNAKLALLV (487 aa)) the chain is Cytoplasmic. 201-208 (GPPGTGKT) is a binding site for ATP. Residue H423 participates in Zn(2+) binding. E424 is an active-site residue. Zn(2+) is bound by residues H427 and D504.

This sequence in the central section; belongs to the AAA ATPase family. In the C-terminal section; belongs to the peptidase M41 family. Homohexamer (Potential). Part of a large complex that includes FtsH2 and PSII. Coimmunoprecipitates with YidC. Requires Zn(2+) as cofactor.

It localises to the cellular thylakoid membrane. Functionally, acts as a processive, ATP-dependent zinc metallopeptidase for both cytoplasmic and membrane proteins. Plays a role in the quality control of integral membrane proteins. The chain is ATP-dependent zinc metalloprotease FtsH 3 from Synechocystis sp. (strain ATCC 27184 / PCC 6803 / Kazusa).